Consider the following 441-residue polypeptide: Protein FAM83A (441 aa).

Disordered regions lie at residues 81-108 (SNDNQTEGENGSAANGNKSESYYPMNSD) and 312-368 (GMSI…SPLQ). A compositionally biased stretch (polar residues) spans 314–327 (SIMSDSNPESINTT). Low complexity predominate over residues 328 to 354 (SEPFSSISTASISNDSQRPKSPVSTTP).

The protein belongs to the FAM83 family.

The protein localises to the cytoplasm. In terms of biological role, may function in the epidermal growth factor receptor/EGFR signaling pathway. The polypeptide is Protein FAM83A (Xenopus tropicalis (Western clawed frog)).